A 275-amino-acid chain; its full sequence is Secreted RxLR effector protein 153 (275 aa).

The N-terminal stretch at 1–27 (MRNRAFLFGLFFIEYACLVLFAAPTRA) is a signal peptide. Asparagine 45 carries an N-linked (GlcNAc...) asparagine glycan. Residues 48-63 (RTLQADDSKRISAEER) carry the RxLR-dEER motif.

This sequence belongs to the RxLR effector family.

It is found in the secreted. It localises to the host cell membrane. In terms of biological role, secreted effector that completely suppresses the host cell death induced by cell death-inducing proteins. This Plasmopara viticola (Downy mildew of grapevine) protein is Secreted RxLR effector protein 153.